Here is a 112-residue protein sequence, read N- to C-terminus: Larval cuticle protein III/IV (112 aa).

Positions 1-16 (MFKILLVCALAALVAA) are cleaved as a signal peptide. Residues 31-92 (PDGFKTVVSL…PSSDLLPVAP (62 aa)) form the Chitin-binding type R&amp;R domain.

Functionally, component of the larval cuticle. The protein is Larval cuticle protein III/IV (Lcp3) of Drosophila miranda (Fruit fly).